The chain runs to 47 residues: Heat shock protein HSP 90 (47 aa).

Belongs to the heat shock protein 90 family. In terms of assembly, homodimer.

The protein localises to the cytoplasm. Functionally, putative molecular chaperone that may promote the maturation, structural maintenance and proper regulation of specific target proteins. The chain is Heat shock protein HSP 90 from Oryctolagus cuniculus (Rabbit).